Here is a 273-residue protein sequence, read N- to C-terminus: Outer surface protein A (273 aa).

A signal peptide spans 1–16 (MKKYLLGIGLILALIA). A lipid anchor (N-palmitoyl cysteine) is attached at Cys17. The S-diacylglycerol cysteine moiety is linked to residue Cys17.

Belongs to the OspA lipoprotein family.

Its subcellular location is the cell outer membrane. The protein resides in the cell surface. This chain is Outer surface protein A, found in Borreliella burgdorferi (Lyme disease spirochete).